A 123-amino-acid chain; its full sequence is Ribosome-binding factor A (123 aa).

Belongs to the RbfA family. In terms of assembly, monomer. Binds 30S ribosomal subunits, but not 50S ribosomal subunits or 70S ribosomes.

Its subcellular location is the cytoplasm. In terms of biological role, one of several proteins that assist in the late maturation steps of the functional core of the 30S ribosomal subunit. Associates with free 30S ribosomal subunits (but not with 30S subunits that are part of 70S ribosomes or polysomes). Required for efficient processing of 16S rRNA. May interact with the 5'-terminal helix region of 16S rRNA. The protein is Ribosome-binding factor A of Chlamydia trachomatis serovar L2 (strain ATCC VR-902B / DSM 19102 / 434/Bu).